We begin with the raw amino-acid sequence, 88 residues long: UPF0335 protein MexAM1_META1p2947 (88 aa).

The protein belongs to the UPF0335 family.

In Methylorubrum extorquens (strain ATCC 14718 / DSM 1338 / JCM 2805 / NCIMB 9133 / AM1) (Methylobacterium extorquens), this protein is UPF0335 protein MexAM1_META1p2947.